The following is a 246-amino-acid chain: Serine protease 1 (246 aa).

The N-terminal stretch at 1–15 is a signal peptide; that stretch reads MSALLILALVGAAVA. Positions 16–23 are cleaved as a propeptide — activation peptide; it reads FPLEDDDK. Residues 24–244 enclose the Peptidase S1 domain; it reads IVGGYTCPEH…FVGWIQDTIA (221 aa). 6 disulfide bridges follow: cysteine 30–cysteine 160, cysteine 48–cysteine 64, cysteine 132–cysteine 233, cysteine 139–cysteine 206, cysteine 171–cysteine 185, and cysteine 196–cysteine 220. Histidine 63 (charge relay system) is an active-site residue. Glutamate 75, asparagine 77, valine 80, and glutamate 85 together coordinate Ca(2+). The Charge relay system role is filled by aspartate 107. The active-site Charge relay system is serine 200.

Belongs to the peptidase S1 family. In terms of assembly, interacts with SERPINA1. It depends on Ca(2+) as a cofactor.

The protein localises to the secreted. The protein resides in the extracellular space. It catalyses the reaction Preferential cleavage: Arg-|-Xaa, Lys-|-Xaa.. This chain is Serine protease 1, found in Rattus norvegicus (Rat).